We begin with the raw amino-acid sequence, 545 residues long: Membrane protein insertase YidC (545 aa).

Residues leucine 6–aspartate 26 form a helical membrane-spanning segment. Residues proline 34 to proline 59 are disordered. 3 helical membrane-spanning segments follow: residues leucine 357–phenylalanine 377, glycine 428–leucine 448, and proline 505–valine 525.

The protein belongs to the OXA1/ALB3/YidC family. Type 1 subfamily. Interacts with the Sec translocase complex via SecD. Specifically interacts with transmembrane segments of nascent integral membrane proteins during membrane integration.

It is found in the cell inner membrane. Required for the insertion and/or proper folding and/or complex formation of integral membrane proteins into the membrane. Involved in integration of membrane proteins that insert both dependently and independently of the Sec translocase complex, as well as at least some lipoproteins. Aids folding of multispanning membrane proteins. This chain is Membrane protein insertase YidC, found in Nitrosococcus oceani (strain ATCC 19707 / BCRC 17464 / JCM 30415 / NCIMB 11848 / C-107).